A 585-amino-acid polypeptide reads, in one-letter code: Parathyroid hormone/parathyroid hormone-related peptide receptor (585 aa).

A signal peptide spans 1-26 (MGAPRISHSLALLLCCSVLSSVYALV). Residues 27–185 (DADDVITKEE…REREVFDRLG (159 aa)) are Extracellular-facing. Intrachain disulfides connect cysteine 48–cysteine 114, cysteine 105–cysteine 145, and cysteine 128–cysteine 167. The tract at residues 69-90 (MSRSAKTKKEKPAEKLYSQAEE) is disordered. N-linked (GlcNAc...) asparagine glycosylation is found at asparagine 148, asparagine 158, asparagine 163, and asparagine 173. Residues 186-209 (MIYTVGYSISLGSLTVAVLILGYF) form a helical membrane-spanning segment. Over 210–216 (RRLHCTR) the chain is Cytoplasmic. The chain crosses the membrane as a helical span at residues 217–236 (NYIHMHLFVSFMLRAVSIFI). Topologically, residues 237–276 (KDAVLYSGVSTDEIERITEEELRAFTEPPPADKAGFVGCR) are extracellular. Residues 277–300 (VAVTVFLYFLTTNYYWILVEGLYL) traverse the membrane as a helical segment. Residues 301 to 314 (HSLIFMAFFSEKKY) are Cytoplasmic-facing. A helical membrane pass occupies residues 315-336 (LWGFTLFGWGLPAVFVAVWVTV). The Extracellular portion of the chain corresponds to 337-355 (RATLANTECWDLSSGNKKW). A helical transmembrane segment spans residues 356 to 376 (IIQVPILAAIVVNFILFINII). Topologically, residues 377-403 (RVLATKLRETNAGRCDTRQQYRKLLKS) are cytoplasmic. A helical transmembrane segment spans residues 404-422 (TLVLMPLFGVHYIVFMATP). Over 423 to 434 (YTEVSGILWQVQ) the chain is Extracellular. Residues 435 to 457 (MHYEMLFNSFQGFFVAIIYCFCN) traverse the membrane as a helical segment. Residues 458–585 (GEVQAEIKKS…LLEEERETVM (128 aa)) lie on the Cytoplasmic side of the membrane. An Important for interaction with G proteins motif is present at residues 468–471 (WSRW). Residues 531-585 (PGYVKHGSISENSLPSSGPEPGTKDDGYLNGSGLYEPMVGEQPPPLLEEERETVM) form a disordered region.

The protein belongs to the G-protein coupled receptor 2 family. In terms of assembly, homodimer in the absence of bound ligand. Peptide hormone binding leads to dissociation of the homodimer. In terms of processing, N-glycosylated.

The protein resides in the cell membrane. G-protein-coupled receptor for parathyroid hormone (PTH) and for parathyroid hormone-related peptide (PTHLH). Ligand binding causes a conformation change that triggers signaling via guanine nucleotide-binding proteins (G proteins) and modulates the activity of downstream effectors, such as adenylate cyclase (cAMP). PTH1R is coupled to G(s) G alpha proteins and mediates activation of adenylate cyclase activity. PTHLH dissociates from PTH1R more rapidly than PTH; as consequence, the cAMP response induced by PTHLH decays faster than the response induced by PTH. The protein is Parathyroid hormone/parathyroid hormone-related peptide receptor (PTH1R) of Didelphis virginiana (North American opossum).